The sequence spans 203 residues: ADP-ribosylation factor-like protein 6-interacting protein 1 (203 aa).

The Cytoplasmic portion of the chain corresponds to 1-41 (MAEGDNRSTNLLAAETASLEEQLQGWGEVMLMADKVLRWER). A helical membrane pass occupies residues 42-62 (AWFPPAIMGVVSLVFLIIYYL). The Lumenal segment spans residues 63–65 (DPS). The chain crosses the membrane as a helical span at residues 66-86 (VLSGVSCFVMFLCLADYLVPI). The Cytoplasmic segment spans residues 87 to 133 (LAPRIFGSNKWTTEQQQRFHEICSNLVKTRRRAVGWWKRLFTLKEEK). A helical membrane pass occupies residues 134–175 (PKMYFMTMIVSLAAVAWVGQQVHNLLLTYLIVTSLLLLPGLN). At 176–203 (QHGIILKYIGMAKREINKLLKQKEKKNE) the chain is on the lumenal side.

The protein belongs to the ARL6ip family. As to quaternary structure, homooligomer. Heterodimer with ARL6IP5. Interacts with ARL6. Interacts with TMEM33. Interacts with ATL1. Expressed in all hematopoietic cell lineages, but the highest level of expression is found in early myeloid progenitor cells. Expressed in brain, bone marrow, thymus and lung. Expressed at low level in liver, kidney and spleen. Not detected in heart.

It is found in the endomembrane system. It localises to the endoplasmic reticulum membrane. The protein localises to the endoplasmic reticulum. Positively regulates SLC1A1/EAAC1-mediated glutamate transport by increasing its affinity for glutamate in a PKC activity-dependent manner. Promotes the catalytic efficiency of SLC1A1/EAAC1 probably by reducing its interaction with ARL6IP5, a negative regulator of SLC1A1/EAAC1-mediated glutamate transport. Plays a role in the formation and stabilization of endoplasmic reticulum tubules. Negatively regulates apoptosis, possibly by modulating the activity of caspase-9 (CASP9). Inhibits cleavage of CASP9-dependent substrates and downstream markers of apoptosis but not CASP9 itself. May be involved in protein transport, membrane trafficking, or cell signaling during hematopoietic maturation. The polypeptide is ADP-ribosylation factor-like protein 6-interacting protein 1 (ARL6IP1) (Homo sapiens (Human)).